The sequence spans 113 residues: SGSCQLKTCWQVSPDFRSVGDTLREKFQSALFLPLHNGHGGIGGLLVPRDTQLVYFERSPTFCEQEDDIGSPGTRGRLCERTEQGFSGCSSMCCGRGHNVVRETRVERCNCKF.

The O-palmitoleoyl serine; by PORCN moiety is linked to residue Ser-1. A disulfide bridge connects residues Cys-79 and Cys-94.

Belongs to the Wnt family. Palmitoleoylation is required for efficient binding to frizzled receptors. Depalmitoleoylation leads to Wnt signaling pathway inhibition.

The protein localises to the secreted. The protein resides in the extracellular space. It localises to the extracellular matrix. In terms of biological role, ligand for members of the frizzled family of seven transmembrane receptors. Probable developmental protein. May be a signaling molecule which affects the development of discrete regions of tissues. Is likely to signal over only few cell diameters. This chain is Protein Wnt-10 (WNT-10), found in Eptatretus stoutii (Pacific hagfish).